The primary structure comprises 240 residues: Uridylate kinase (240 aa).

Lys-14–Gly-17 lines the ATP pocket. Gly-56 is a UMP binding site. Positions 57 and 61 each coordinate ATP. Residues Asp-76 and Thr-137–Thr-144 contribute to the UMP site. Thr-164, Tyr-170, and Asp-173 together coordinate ATP.

It belongs to the UMP kinase family. In terms of assembly, homohexamer.

The protein resides in the cytoplasm. The catalysed reaction is UMP + ATP = UDP + ADP. It functions in the pathway pyrimidine metabolism; CTP biosynthesis via de novo pathway; UDP from UMP (UMPK route): step 1/1. Its activity is regulated as follows. Inhibited by UTP. Its function is as follows. Catalyzes the reversible phosphorylation of UMP to UDP. The sequence is that of Uridylate kinase from Albidiferax ferrireducens (strain ATCC BAA-621 / DSM 15236 / T118) (Rhodoferax ferrireducens).